The chain runs to 314 residues: MLGSSGRRLLTTVLQAQRWPFQPSRNMRLVQFQAPHLAGPHLGLESGNGGGVIDLNAFEPTLPKTMVEFLEQGEATLSVVRRALATQLPVLPRSEVTFLAPVTRPDKVVCVGMNYADHCREQNVPVPKEPIIFSKFASAIVGPYDNIILPPESQEVDWEVELAVVIGKRGKYIKATDAMAHVAGFTVAHDVSARDWQMGRNGKQWLLGKTFDTFCPLGPALVTKDSVADPHNLKICCRVNGEVMQSSNTNQMVFKTEELITWVSQFVTLYPGDIILTGTPPGVGVFRKPPVFLKKGDEVQCEIEELGVIINKVV.

The transit peptide at 1–84 directs the protein to the mitochondrion; that stretch reads MLGSSGRRLL…ATLSVVRRAL (84 aa). Mg(2+) is bound by residues Glu159, Glu161, and Asp190.

This sequence belongs to the FAH family. The cofactor is Mg(2+). Requires Mn(2+) as cofactor.

It is found in the mitochondrion. The catalysed reaction is oxaloacetate = enol-oxaloacetate. Tautomerase that converts enol-oxaloacetate, a strong inhibitor of succinate dehydrogenase, to the physiological keto form of oxaloacetate. It is thereby required to maximize aerobic respiration efficiency by preventing succinate dehydrogenase inhibition. This chain is Oxaloacetate tautomerase FAHD2A, mitochondrial, found in Bos taurus (Bovine).